A 1221-amino-acid polypeptide reads, in one-letter code: A disintegrin and metalloproteinase with thrombospondin motifs 18 (1221 aa).

An N-terminal signal peptide occupies residues 1 to 47 (MECALLLACAFPAAGSGPPRGLAGLGRVAKALQLCCLCCASVAAALA). Positions 48 to 284 (SDSSSGASGL…EYGSSGRPRR (237 aa)) are excised as a propeptide. Residues Asn151 and Asn190 are each glycosylated (N-linked (GlcNAc...) asparagine). Positions 252-259 (HFCGRRKK) match the Cysteine switch motif. Cys254 lines the Zn(2+) pocket. Positions 258–291 (KKYAPKPPTEDTYLRFDEYGSSGRPRRSAGKSQK) are disordered. A compositionally biased stretch (basic and acidic residues) spans 265-275 (PTEDTYLRFDE). Positions 293–498 (LNVETLVVAD…PQAGCLVDEP (206 aa)) constitute a Peptidase M12B domain. N-linked (GlcNAc...) asparagine glycosylation occurs at Asn313. 11 disulfides stabilise this stretch: Cys369–Cys420, Cys395–Cys402, Cys414–Cys493, Cys453–Cys477, Cys521–Cys546, Cys532–Cys553, Cys541–Cys572, Cys566–Cys577, Cys601–Cys638, Cys605–Cys643, and Cys616–Cys628. His436 lines the Zn(2+) pocket. Glu437 is a catalytic residue. Zn(2+) contacts are provided by His440 and His446. A Disintegrin domain is found at 498–577 (PKQAGQYKYP…LSMWCRQGQC (80 aa)). The 56-residue stretch at 589–644 (HGQWSAWSKWSECSRTCGGGVKFQERHCNNPKPQYGGLFCPGSSRIYQLCNINPCN) folds into the TSP type-1 1 domain. N-linked (GlcNAc...) asparagine glycans are attached at residues Asn745, Asn838, and Asn909. The interval 750-876 (FYKGLYLNQH…TPPATKRPAY (127 aa)) is spacer. TSP type-1 domains lie at 931-990 (CPAY…NSHA), 991-1049 (CPPQ…GRCP), 1052-1116 (SRLQ…RACP), and 1123-1178 (MVAG…NFCP). The PLAC domain maps to 1184-1221 (EDPSCVDFFNWCHLVPQHGVCNHKFYGKQCCKSCTRKI).

The cofactor is Zn(2+). In terms of processing, the precursor is cleaved by a furin endopeptidase. Post-translationally, glycosylated. Can be O-fucosylated by POFUT2 on a serine or a threonine residue found within the consensus sequence C1-X(2)-(S/T)-C2-G of the TSP type-1 repeat domains where C1 and C2 are the first and second cysteine residue of the repeat, respectively. Fucosylated repeats can then be further glycosylated by the addition of a beta-1,3-glucose residue by the glucosyltransferase, B3GALTL. Fucosylation mediates the efficient secretion of ADAMTS family members. Can also be C-glycosylated with one or two mannose molecules on tryptophan residues within the consensus sequence W-X-X-W of the TPRs, and N-glycosylated. These other glycosylations can also facilitate secretion. Expressed in fetal lung, liver, and kidney and in adult brain, prostate, submaxillary gland, and endothelium.

The protein resides in the secreted. Its subcellular location is the extracellular space. It localises to the extracellular matrix. In Homo sapiens (Human), this protein is A disintegrin and metalloproteinase with thrombospondin motifs 18 (ADAMTS18).